Consider the following 346-residue polypeptide: NADH-quinone oxidoreductase subunit H (346 aa).

9 helical membrane-spanning segments follow: residues 13–33 (ILLI…ALAF), 51–71 (PNVV…KYIV), 83–103 (AVYF…WAVI), 116–136 (VAVL…IMGG), 162–182 (IGLI…TAIV), 191–211 (LLNW…ISAL), 244–264 (FMIG…LLFF), 278–298 (VFWM…VKAI), and 310–330 (LGWK…AFMA).

Belongs to the complex I subunit 1 family. NDH-1 is composed of 14 different subunits. Subunits NuoA, H, J, K, L, M, N constitute the membrane sector of the complex.

It localises to the cell inner membrane. It catalyses the reaction a quinone + NADH + 5 H(+)(in) = a quinol + NAD(+) + 4 H(+)(out). In terms of biological role, NDH-1 shuttles electrons from NADH, via FMN and iron-sulfur (Fe-S) centers, to quinones in the respiratory chain. The immediate electron acceptor for the enzyme in this species is believed to be ubiquinone. Couples the redox reaction to proton translocation (for every two electrons transferred, four hydrogen ions are translocated across the cytoplasmic membrane), and thus conserves the redox energy in a proton gradient. This subunit may bind ubiquinone. The polypeptide is NADH-quinone oxidoreductase subunit H (Jannaschia sp. (strain CCS1)).